The chain runs to 364 residues: Phosrestin-2 (364 aa).

This sequence belongs to the arrestin family. Phosphorylated, but does not undergo light-induced phosphorylation. In terms of tissue distribution, expressed specifically and abundantly in photoreceptor cells in retina and ocelli.

Its subcellular location is the cell projection. It localises to the rhabdomere. Its function is as follows. Regulates photoreceptor cell deactivation. Arr1 and Arr2 proteins are mediators of rhodopsin inactivation and are essential for the termination of the phototransduction cascade. Involved in regulating normal cycles of per nuclear accumulation in brain circadian neurons and thus is important for normal circadian behavior. In the dark, functions with Arr2 to promote the formation of cytosolic Bdbt foci, which are required for dco localization to photoreceptor nuclei where it phosphorylates and activates degradation of per. In Drosophila melanogaster (Fruit fly), this protein is Phosrestin-2 (Arr1).